The primary structure comprises 297 residues: 4-diphosphocytidyl-2-C-methyl-D-erythritol kinase (297 aa).

The active site involves Lys-14. ATP is bound at residue 99–109 (PVAAGIGGGSA). Asp-141 is a catalytic residue.

This sequence belongs to the GHMP kinase family. IspE subfamily.

It catalyses the reaction 4-CDP-2-C-methyl-D-erythritol + ATP = 4-CDP-2-C-methyl-D-erythritol 2-phosphate + ADP + H(+). Its pathway is isoprenoid biosynthesis; isopentenyl diphosphate biosynthesis via DXP pathway; isopentenyl diphosphate from 1-deoxy-D-xylulose 5-phosphate: step 3/6. Its function is as follows. Catalyzes the phosphorylation of the position 2 hydroxy group of 4-diphosphocytidyl-2C-methyl-D-erythritol. This is 4-diphosphocytidyl-2-C-methyl-D-erythritol kinase from Bradyrhizobium diazoefficiens (strain JCM 10833 / BCRC 13528 / IAM 13628 / NBRC 14792 / USDA 110).